Consider the following 407-residue polypeptide: Aurofusarin biosynthesis cluster protein S (407 aa).

Positions 1 to 35 are cleaved as a signal peptide; it reads MSKQKPSLWRALRALSFIISIPLLIQYLVLKWYST. N-linked (GlcNAc...) asparagine glycans are attached at residues asparagine 52, asparagine 174, asparagine 196, asparagine 274, and asparagine 312. FAS1 domains are found at residues 52 to 192 and 195 to 365; these read NLTV…DTVL and PNST…DSIL.

In terms of assembly, might be part of an extracellular enzyme complex composed of GIP1, aurF, aurO and aurS.

It is found in the secreted. It localises to the extracellular space. It participates in pigment biosynthesis. Its function is as follows. Part of the gene cluster that mediates the biosynthesis of aurofusarin, a red mycelium pigment which is acting as a mycotoxin. The first step is performed by the polyketide synthase which condenses one acetyl-CoA and 6 malonyl-CoA units to form the first intermediate, the cyclic heptaketide and yellow pigment YWA1. The C2 hydroxyl group in the pyrone ring of YWA1 is probably formed during ring closure by an aldol-type cyclization reaction. The dehydratase aurZ then acts as the first tailoring enzyme in the aurofusarin biosynthetic pathway by converting YWA1 to nor-rubrofusarin. Nor-rubrofusarin is then methylated to rubrofusarin by the O-methyltransferase aurJ. Rubrofusarin is then transported across the plasma membrane by the rubrofusarin-specific pump aurT for further enzymatic processing by the extracellular complex composed of GIP1, aurF, aurO and aurS to yield aurofusarin. The sequence is that of Aurofusarin biosynthesis cluster protein S from Gibberella zeae (strain ATCC MYA-4620 / CBS 123657 / FGSC 9075 / NRRL 31084 / PH-1) (Wheat head blight fungus).